A 121-amino-acid chain; its full sequence is Ribonuclease P protein component (121 aa).

This sequence belongs to the RnpA family. In terms of assembly, consists of a catalytic RNA component (M1 or rnpB) and a protein subunit.

It catalyses the reaction Endonucleolytic cleavage of RNA, removing 5'-extranucleotides from tRNA precursor.. RNaseP catalyzes the removal of the 5'-leader sequence from pre-tRNA to produce the mature 5'-terminus. It can also cleave other RNA substrates such as 4.5S RNA. The protein component plays an auxiliary but essential role in vivo by binding to the 5'-leader sequence and broadening the substrate specificity of the ribozyme. This Geobacillus thermodenitrificans (strain NG80-2) protein is Ribonuclease P protein component.